Here is an 866-residue protein sequence, read N- to C-terminus: Coiled-coil domain-containing protein 178 (866 aa).

Residues 1–21 (MPENEKEPAQPTTNEDALDTG) are disordered. Coiled-coil stretches lie at residues 157 to 266 (ELKK…DYMA), 292 to 403 (EVME…DQYC), 439 to 480 (KDLT…EEEV), 514 to 539 (KTEELEDKLADLKRIFKGREELLKKL), 570 to 631 (RRQV…LLKK), and 665 to 705 (EKCI…REHV).

This Mus musculus (Mouse) protein is Coiled-coil domain-containing protein 178 (Ccdc178).